We begin with the raw amino-acid sequence, 301 residues long: Glycerol-3-phosphate dehydrogenase [NAD(P)+] (301 aa).

Residues Trp13, Arg33, and Lys78 each coordinate NADPH. Residues Lys78 and Gly106 each coordinate sn-glycerol 3-phosphate. Ala110 is an NADPH binding site. Residues Lys161, Asp214, Ser224, Arg225, and Asn226 each coordinate sn-glycerol 3-phosphate. Lys161 (proton acceptor) is an active-site residue. Residue Arg225 coordinates NADPH. An NADPH-binding site is contributed by Glu251.

This sequence belongs to the NAD-dependent glycerol-3-phosphate dehydrogenase family.

It localises to the cytoplasm. The enzyme catalyses sn-glycerol 3-phosphate + NAD(+) = dihydroxyacetone phosphate + NADH + H(+). It catalyses the reaction sn-glycerol 3-phosphate + NADP(+) = dihydroxyacetone phosphate + NADPH + H(+). The protein operates within membrane lipid metabolism; glycerophospholipid metabolism. Catalyzes the reduction of the glycolytic intermediate dihydroxyacetone phosphate (DHAP) to sn-glycerol 3-phosphate (G3P), the key precursor for phospholipid synthesis. This is Glycerol-3-phosphate dehydrogenase [NAD(P)+] from Synechococcus sp. (strain RCC307).